A 234-amino-acid polypeptide reads, in one-letter code: MSIIKLVLMRHGSSIWNDQDRFTGWTDIDLSEKGKNEVKYAGKMLKSFGYSFNFAYTSLLKRAIHSLWVILKEINQSWIPVEKSWRLNERHYGALQGFSKYEIEKKYGKNQLNEWRRGFSISPPKINEKDNYFILNDKRYLNLKTKKLLPFSESLKSTIDRIMPYWDGNIFPRLQNKEKIIIVAHGNSIRAIIKILCNLNEKEIIKINIPTGIPLIYEFDYNMVFKKKYFLFDR.

Substrate-binding positions include 10 to 17 (RHGSSIWN), 23 to 24 (TG), Arg62, 89 to 92 (ERHY), Lys100, 116 to 117 (RR), and 186 to 187 (GN). Residue His11 is the Tele-phosphohistidine intermediate of the active site. Glu89 functions as the Proton donor/acceptor in the catalytic mechanism.

The protein belongs to the phosphoglycerate mutase family. BPG-dependent PGAM subfamily. Homodimer.

The enzyme catalyses (2R)-2-phosphoglycerate = (2R)-3-phosphoglycerate. Its pathway is carbohydrate degradation; glycolysis; pyruvate from D-glyceraldehyde 3-phosphate: step 3/5. Its function is as follows. Catalyzes the interconversion of 2-phosphoglycerate and 3-phosphoglycerate. This Wigglesworthia glossinidia brevipalpis protein is 2,3-bisphosphoglycerate-dependent phosphoglycerate mutase.